The primary structure comprises 334 residues: Glycerol-3-phosphate dehydrogenase [NAD(P)+] 2 (334 aa).

Residues Trp-16, Arg-36, Arg-37, and Lys-110 each contribute to the NADPH site. Residues Lys-110 and Gly-140 each coordinate sn-glycerol 3-phosphate. An NADPH-binding site is contributed by Ala-144. Residues Lys-195, Asp-248, Ser-258, Arg-259, and Asn-260 each contribute to the sn-glycerol 3-phosphate site. The active-site Proton acceptor is Lys-195. Arg-259 contributes to the NADPH binding site. 2 residues coordinate NADPH: Val-282 and Glu-284.

This sequence belongs to the NAD-dependent glycerol-3-phosphate dehydrogenase family.

Its subcellular location is the cytoplasm. The enzyme catalyses sn-glycerol 3-phosphate + NAD(+) = dihydroxyacetone phosphate + NADH + H(+). The catalysed reaction is sn-glycerol 3-phosphate + NADP(+) = dihydroxyacetone phosphate + NADPH + H(+). The protein operates within membrane lipid metabolism; glycerophospholipid metabolism. Its function is as follows. Catalyzes the reduction of the glycolytic intermediate dihydroxyacetone phosphate (DHAP) to sn-glycerol 3-phosphate (G3P), the key precursor for phospholipid synthesis. The polypeptide is Glycerol-3-phosphate dehydrogenase [NAD(P)+] 2 (Mycobacterium bovis (strain ATCC BAA-935 / AF2122/97)).